We begin with the raw amino-acid sequence, 449 residues long: Wilms tumor protein homolog (449 aa).

Residues 48–84 are disordered; that stretch reads YGSLGGPAPPPAPPPPPPPPPHSFIKQEPSWGGAEPH. Positions 54–69 are enriched in pro residues; it reads PAPPPAPPPPPPPPPH. Residues Lys-73 and Lys-177 each participate in a glycyl lysine isopeptide (Lys-Gly) (interchain with G-Cter in SUMO) cross-link. The 9aaTAD signature appears at 236-244; sequence MTWNQMNLG. 3 consecutive C2H2-type zinc fingers follow at residues 323–347, 353–377, and 383–405; these read FMCA…SRKH, YQCD…QRRH, and FQCK…TRTH. Important for interaction with target DNA stretches follow at residues 367–381 and 393–401; these read SDQL…TGVK and SRSDHLKTH. A KTS motif motif is present at residues 408 to 410; sequence KTS. Residues 414-438 form a C2H2-type 4 zinc finger; sequence FSCRWPSCQKKFARSDELVRHHNMH. Residue Lys-444 forms a Glycyl lysine isopeptide (Lys-Gly) (interchain with G-Cter in SUMO2) linkage.

It belongs to the EGR C2H2-type zinc-finger protein family. As to quaternary structure, interacts with ZNF224 via the zinc-finger region. Interacts with WTAP, AMER1 and SRY. Homodimer. Interacts with WTIP. Interacts with actively translating polysomes. Detected in nuclear ribonucleoprotein (mRNP) particles. Interacts with U2AF2. Interacts with HNRNPU via the zinc-finger region. Interacts with CITED2. Interacts with RBM4.

It localises to the nucleus speckle. The protein localises to the nucleus. It is found in the nucleoplasm. Its subcellular location is the nucleolus. The protein resides in the cytoplasm. Its function is as follows. Transcription factor that plays an important role in cellular development and cell survival. Recognizes and binds to the DNA sequence 5'-GCG(T/G)GGGCG-3'. Regulates the expression of numerous target genes, including EPO. Plays an essential role for development of the urogenital system. It has a tumor suppressor as well as an oncogenic role in tumor formation. Function may be isoform-specific: isoforms lacking the KTS motif may act as transcription factors. Isoforms containing the KTS motif may bind mRNA and play a role in mRNA metabolism or splicing. Isoform 1 has lower affinity for DNA, and can bind RNA. This Sus scrofa (Pig) protein is Wilms tumor protein homolog (WT1).